Reading from the N-terminus, the 511-residue chain is Probable lipid II flippase MurJ (511 aa).

A run of 11 helical transmembrane segments spans residues 25-45, 85-105, 133-153, 156-178, 245-265, 271-291, 315-335, 356-376, 400-420, 442-462, and 481-501; these read DILI…FISF, SSIL…GGFF, IMFP…ILNS, YFSI…SVFF, ISLI…ISWI, LIEF…FTSL, LIVS…VIIV, LYSC…AFYA, FLIF…TSWV, FIFI…LFVV, and LFFG…ILGI.

It belongs to the MurJ/MviN family.

The protein resides in the cell inner membrane. It functions in the pathway cell wall biogenesis; peptidoglycan biosynthesis. Its function is as follows. Involved in peptidoglycan biosynthesis. Transports lipid-linked peptidoglycan precursors from the inner to the outer leaflet of the cytoplasmic membrane. The protein is Probable lipid II flippase MurJ of Buchnera aphidicola subsp. Acyrthosiphon pisum (strain APS) (Acyrthosiphon pisum symbiotic bacterium).